Consider the following 302-residue polypeptide: N-acetylmuramic acid 6-phosphate etherase (302 aa).

An SIS domain is found at 58–221 (IGEAFLNGGR…STGAMVKTGK (164 aa)). Catalysis depends on glutamate 86, which acts as the Proton donor. Glutamate 117 is a catalytic residue.

Belongs to the GCKR-like family. MurNAc-6-P etherase subfamily. In terms of assembly, homodimer.

The enzyme catalyses N-acetyl-D-muramate 6-phosphate + H2O = N-acetyl-D-glucosamine 6-phosphate + (R)-lactate. Its pathway is amino-sugar metabolism; N-acetylmuramate degradation. In terms of biological role, specifically catalyzes the cleavage of the D-lactyl ether substituent of MurNAc 6-phosphate, producing GlcNAc 6-phosphate and D-lactate. This chain is N-acetylmuramic acid 6-phosphate etherase, found in Clostridium botulinum (strain Hall / ATCC 3502 / NCTC 13319 / Type A).